A 573-amino-acid chain; its full sequence is Arginine--tRNA ligase (573 aa).

The 'HIGH' region signature appears at 122–132 (PNLAKEMHVGH).

The protein belongs to the class-I aminoacyl-tRNA synthetase family. In terms of assembly, monomer.

The protein localises to the cytoplasm. It catalyses the reaction tRNA(Arg) + L-arginine + ATP = L-arginyl-tRNA(Arg) + AMP + diphosphate. This Laribacter hongkongensis (strain HLHK9) protein is Arginine--tRNA ligase.